Here is a 431-residue protein sequence, read N- to C-terminus: Divergent protein kinase domain 1B (431 aa).

Over 1 to 30 (MRRLRRLVHLVLLCPFSKGLQGRLPGLRVK) the chain is Cytoplasmic. A May mediate ER retention motif is present at residues 5–6 (RR). The chain crosses the membrane as a helical span at residues 31–51 (YVLLVWLGIFVGSWMVYVHYS). Over 52–431 (SYSELCRGHV…WREISNTNYS (380 aa)) the chain is Lumenal. Cystine bridges form between Cys-57–Cys-94 and Cys-62–Cys-117.

Belongs to the DIPK family. Among the many cysteines in the lumenal domain, most are probably involved in disulfide bonds.

It localises to the endoplasmic reticulum membrane. The sequence is that of Divergent protein kinase domain 1B from Rattus norvegicus (Rat).